We begin with the raw amino-acid sequence, 290 residues long: 33 kDa chaperonin (290 aa).

Cystine bridges form between cysteine 235/cysteine 237 and cysteine 268/cysteine 271.

Belongs to the HSP33 family. In terms of processing, under oxidizing conditions two disulfide bonds are formed involving the reactive cysteines. Under reducing conditions zinc is bound to the reactive cysteines and the protein is inactive.

Its subcellular location is the cytoplasm. Its function is as follows. Redox regulated molecular chaperone. Protects both thermally unfolding and oxidatively damaged proteins from irreversible aggregation. Plays an important role in the bacterial defense system toward oxidative stress. In Streptococcus pyogenes serotype M12 (strain MGAS2096), this protein is 33 kDa chaperonin.